We begin with the raw amino-acid sequence, 113 residues long: Histone H2B (113 aa).

Positions 1 to 21 (MPATPAKRAKRVQQEKRHHKK) are disordered. A compositionally biased stretch (basic residues) spans 7-21 (KRAKRVQQEKRHHKK). A Glycyl lysine isopeptide (Lys-Gly) (interchain with G-Cter in ubiquitin) cross-link involves residue lysine 109.

It belongs to the histone H2B family. The nucleosome is a histone octamer containing two molecules each of H2A, H2B, H3 and H4 assembled in one H3-H4 heterotetramer and two H2A-H2B heterodimers. The octamer wraps approximately 147 bp of DNA. In terms of processing, monoubiquitination of Lys-109 gives a specific tag for epigenetic transcriptional activation and is also prerequisite for histone H3 'Lys-4' and 'Lys-79' methylation.

The protein resides in the nucleus. The protein localises to the chromosome. In terms of biological role, core component of nucleosome. Nucleosomes wrap and compact DNA into chromatin, limiting DNA accessibility to the cellular machineries which require DNA as a template. Histones thereby play a central role in transcription regulation, DNA repair, DNA replication and chromosomal stability. DNA accessibility is regulated via a complex set of post-translational modifications of histones, also called histone code, and nucleosome remodeling. This is Histone H2B (H2B1) from Euplotes crassus.